A 190-amino-acid polypeptide reads, in one-letter code: Syndecan-2-B (190 aa).

The first 22 residues, 1-22, serve as a signal peptide directing secretion; it reads MRNVWLIVPFALLAAFSGETWA. Over 23–136 the chain is Extracellular; the sequence is QADRDLYIDS…NLFHRTEVLA (114 aa). Residues 34–60 form a disordered region; the sequence is ESSGNYPVDDDDYSSGSGSGIPAHDDD. Residues S36, S48, S50, and S52 are each glycosylated (O-linked (Xyl...) (glycosaminoglycan) serine). A helical membrane pass occupies residues 137-157; the sequence is AVIAGGGIGFLFAVFLILLLV. Over 158 to 190 the chain is Cytoplasmic; sequence YRMRKKDEGSYDLGERKPSSAVYQKAPTKEFYA. Residues 167 to 190 form a disordered region; the sequence is SYDLGERKPSSAVYQKAPTKEFYA.

It belongs to the syndecan proteoglycan family. In terms of processing, O-glycosylated; contains both heparan sulfate and chondroitin sulfate.

The protein resides in the membrane. Cell surface proteoglycan. The protein is Syndecan-2-B (sdc2-b) of Xenopus laevis (African clawed frog).